The sequence spans 522 residues: ARS-binding protein 1 (522 aa).

One can recognise an HTH CENPB-type domain in the interval 70–144 (DVKRNRPPKY…RKRHILHAIN (75 aa)). Residue Thr460 is modified to Phosphothreonine.

Interacts with mcm10.

It is found in the nucleus. Binds, preferentially, to the Maundrell ARS consensus sequence within ARS3002. This Schizosaccharomyces pombe (strain 972 / ATCC 24843) (Fission yeast) protein is ARS-binding protein 1 (abp1).